A 333-amino-acid polypeptide reads, in one-letter code: MSEPSEKKQKVATSSLEQLKKAGTHVVADSGDFEAISKYEPQDSTTNPSLILAASKLEKYARFIDAAVEYGRKHGKTDHEKIENAMDKILVEFGTQILKVVPGRVSTEVDARLSFDKKATVKKALHIIKLYKDAGVPKERVLIKIASTWEGIQAARELEVKHGIHCNMTLLFSFTQAVACAEANVTLISPFVGRIMDFYKALSGKDYTAETDPGVLSVKKIYSYYKRHGYATEVMAASFRNLDELKALAGIDNMTLPLNLLEQLYESTDPIENKLNSESAKEEGVEKVSFINDEPHFRYVLNEDQMATEKLSDGIRKFSADIEALYKLVEEKM.

The Schiff-base intermediate with substrate role is filled by lysine 144.

It belongs to the transaldolase family. Type 1 subfamily. As to quaternary structure, homodimer.

It carries out the reaction D-sedoheptulose 7-phosphate + D-glyceraldehyde 3-phosphate = D-erythrose 4-phosphate + beta-D-fructose 6-phosphate. The protein operates within carbohydrate degradation; pentose phosphate pathway; D-glyceraldehyde 3-phosphate and beta-D-fructose 6-phosphate from D-ribose 5-phosphate and D-xylulose 5-phosphate (non-oxidative stage): step 2/3. Its function is as follows. Transaldolase is important for the balance of metabolites in the pentose-phosphate pathway. This is Transaldolase NQM1 (NQM1) from Saccharomyces cerevisiae (strain ATCC 204508 / S288c) (Baker's yeast).